The chain runs to 279 residues: MADS-box transcription factor PHERES 1 (279 aa).

The MADS-box domain occupies 1–60 (MRGKMKLSFIENDSVRKTTFTKRKKGMLKKFNELVTLCGVDACAVIRSPYNSIQEPWPSR).

As to quaternary structure, interacts with AGL61/DIANA and AGL62. As to expression, male gametophyte, embryo and endosperm.

The protein resides in the nucleus. Functionally, probable transcription factor involved in the development of gametophytes and seeds. This chain is MADS-box transcription factor PHERES 1 (PHE1), found in Arabidopsis thaliana (Mouse-ear cress).